Reading from the N-terminus, the 355-residue chain is Uroporphyrinogen decarboxylase (355 aa).

Substrate contacts are provided by residues 27–31, aspartate 77, tyrosine 154, threonine 209, and histidine 328; that span reads RQAGR.

Belongs to the uroporphyrinogen decarboxylase family. Homodimer.

The protein resides in the cytoplasm. It carries out the reaction uroporphyrinogen III + 4 H(+) = coproporphyrinogen III + 4 CO2. The protein operates within porphyrin-containing compound metabolism; protoporphyrin-IX biosynthesis; coproporphyrinogen-III from 5-aminolevulinate: step 4/4. Catalyzes the decarboxylation of four acetate groups of uroporphyrinogen-III to yield coproporphyrinogen-III. This chain is Uroporphyrinogen decarboxylase, found in Dechloromonas aromatica (strain RCB).